The following is a 514-amino-acid chain: LWamide neuropeptides (514 aa).

Residues 1-22 form the signal peptide; the sequence is MALKCHLVLLAITLLLAQCSGS. A compositionally biased stretch (basic and acidic residues) spans 23-53; that stretch reads VDKKDSTTNHLDEKKTDSTEAHIVQETDALK. The propeptide occupies 23-75; that stretch reads VDKKDSTTNHLDEKKTDSTEAHIVQETDALKENSYLGAEEESKEEDKKRSAAP. The segment at 23-180 is disordered; that stretch reads VDKKDSTTNH…PGLWGRSADA (158 aa). Residues W81 and W90 each carry the tryptophan amide modification. The propeptide occupies 93 to 97; the sequence is SADAG. Tryptophan amide occurs at positions 102 and 111. A propeptide spanning residues 114–118 is cleaved from the precursor; the sequence is SADAG. Residues W123 and W132 each carry the tryptophan amide modification. Positions 135-139 are excised as a propeptide; sequence SADAG. 2 positions are modified to tryptophan amide: W144 and W153. The propeptide occupies 156–160; sequence SADAG. Residues W165 and W174 each carry the tryptophan amide modification. The propeptide occupies 177-181; that stretch reads SADAR. W186 carries the post-translational modification Tryptophan amide. Positions 190–199 are excised as a propeptide; sequence EIYALWGGKR. Position 205 is a tryptophan amide (W205). The propeptide occupies 208-212; it reads SADPG. A Tryptophan amide modification is found at W217. Residues 221–230 constitute a propeptide that is removed on maturation; the sequence is ELVGLWGGKR. Tryptophan amide is present on W236. The propeptide occupies 239–243; sequence SAEAG. 2 positions are modified to tryptophan amide: W248 and W257. Residues 258–475 form a disordered region; sequence GRSADPLQPG…GRSAGSGQLG (218 aa). Positions 260-264 are excised as a propeptide; the sequence is SADPL. W269 and W278 each carry tryptophan amide. Positions 281-284 are excised as a propeptide; the sequence is SADP. Tryptophan amide occurs at positions 290 and 299. Residues 302-305 constitute a propeptide that is removed on maturation; it reads SADP. Tryptophan amide occurs at positions 311 and 320. Residues 323-326 constitute a propeptide that is removed on maturation; it reads SADP. A tryptophan amide mark is found at W332 and W341. The propeptide occupies 344-347; sequence SADP. Residue W353 is modified to Tryptophan amide. Residues 356-366 constitute a propeptide that is removed on maturation; that stretch reads SPGLWGRSADP. W372 bears the Tryptophan amide mark. The propeptide occupies 376 to 387; that stretch reads QNPGFWGRSADP. Tryptophan amide occurs at positions 393 and 402. Residues 405 to 408 constitute a propeptide that is removed on maturation; the sequence is SADP. Tryptophan amide occurs at positions 414 and 423. A propeptide spanning residues 426 to 429 is cleaved from the precursor; sequence SADP. Tryptophan amide occurs at positions 435 and 444. The propeptide occupies 447–450; sequence SADP. Tryptophan amide is present on residues W456 and W465. Positions 468–472 are excised as a propeptide; sequence SAGSG. Tryptophan amide is present on residues W477 and W487. The interval 489 to 514 is disordered; the sequence is RSAEPPQFEDLEDLKKKSAIPQPKGQ. The propeptide occupies 490 to 514; the sequence is SAEPPQFEDLEDLKKKSAIPQPKGQ.

Belongs to the LWamide neuropeptide family.

The protein resides in the secreted. In terms of biological role, metamorphosin A may be part of an internal signaling system involved in control of metamorphosis. The sequence is that of LWamide neuropeptides from Anthopleura elegantissima (Green aggregating anemone).